Here is a 68-residue protein sequence, read N- to C-terminus: MNEFEKWIEGRYEPHEQKQKEHEDTMGSIRKDLDAFDKAGLEFEDEIEELAEKTEALLKKHQAQYDQS.

Positions 1 to 27 (MNEFEKWIEGRYEPHEQKQKEHEDTMG) are disordered.

This is an uncharacterized protein from Bacillus subtilis (strain 168).